The chain runs to 243 residues: 1-(5-phosphoribosyl)-5-[(5-phosphoribosylamino)methylideneamino] imidazole-4-carboxamide isomerase (243 aa).

Residue Asp-8 is the Proton acceptor of the active site. Asp-130 (proton donor) is an active-site residue.

It belongs to the HisA/HisF family.

Its subcellular location is the cytoplasm. The enzyme catalyses 1-(5-phospho-beta-D-ribosyl)-5-[(5-phospho-beta-D-ribosylamino)methylideneamino]imidazole-4-carboxamide = 5-[(5-phospho-1-deoxy-D-ribulos-1-ylimino)methylamino]-1-(5-phospho-beta-D-ribosyl)imidazole-4-carboxamide. The protein operates within amino-acid biosynthesis; L-histidine biosynthesis; L-histidine from 5-phospho-alpha-D-ribose 1-diphosphate: step 4/9. The polypeptide is 1-(5-phosphoribosyl)-5-[(5-phosphoribosylamino)methylideneamino] imidazole-4-carboxamide isomerase (Vesicomyosocius okutanii subsp. Calyptogena okutanii (strain HA)).